The sequence spans 340 residues: MSPASPMSEIRHDWQVDEILELMGRPFNDLLFAAHTVHRAHFDPNAVQVSTLLSIKTGACPEDCGYCPQSAHHEVELERERLLPLEEVLEAARNARSHGASRFCMGAAWRNPTDRNLERVIEMVEGVKQLGLETCMTLGMLTDAQARRLKDAGLDYYNHNLDTSPEFYGQVITTRTYQDRLETLAHVREAGINVCSGGILGMGESRRDRARLLQQLANLPRHPESVPINNLVQVEGTPLAGTEALDPFEFVRTIATARILMPASYVRLSAGRTEMHDELQALCFFAGANSIFYGDKLLTTPNPGENHDRALFERLGIHPLEHSDEGASCETCGGVDIHAA.

The 228-residue stretch at 45-272 (NAVQVSTLLS…ASYVRLSAGR (228 aa)) folds into the Radical SAM core domain. The [4Fe-4S] cluster site is built by cysteine 60, cysteine 64, and cysteine 67. 4 residues coordinate [2Fe-2S] cluster: cysteine 104, cysteine 135, cysteine 195, and arginine 267.

The protein belongs to the radical SAM superfamily. Biotin synthase family. Homodimer. The cofactor is [4Fe-4S] cluster. It depends on [2Fe-2S] cluster as a cofactor.

The catalysed reaction is (4R,5S)-dethiobiotin + (sulfur carrier)-SH + 2 reduced [2Fe-2S]-[ferredoxin] + 2 S-adenosyl-L-methionine = (sulfur carrier)-H + biotin + 2 5'-deoxyadenosine + 2 L-methionine + 2 oxidized [2Fe-2S]-[ferredoxin]. It functions in the pathway cofactor biosynthesis; biotin biosynthesis; biotin from 7,8-diaminononanoate: step 2/2. Functionally, catalyzes the conversion of dethiobiotin (DTB) to biotin by the insertion of a sulfur atom into dethiobiotin via a radical-based mechanism. This is Biotin synthase from Thioalkalivibrio sulfidiphilus (strain HL-EbGR7).